Consider the following 205-residue polypeptide: Superoxide dismutase [Fe] (205 aa).

Fe cation contacts are provided by His33, His81, Asp167, and His171.

The protein belongs to the iron/manganese superoxide dismutase family. In terms of assembly, homotetramer. Fe cation is required as a cofactor.

It catalyses the reaction 2 superoxide + 2 H(+) = H2O2 + O2. In terms of biological role, destroys superoxide anion radicals which are normally produced within the cells and which are toxic to biological systems. The sequence is that of Superoxide dismutase [Fe] (sod) from Methanothermobacter thermautotrophicus (strain ATCC 29096 / DSM 1053 / JCM 10044 / NBRC 100330 / Delta H) (Methanobacterium thermoautotrophicum).